A 714-amino-acid chain; its full sequence is Fatty acid oxidation complex subunit alpha (714 aa).

Positions 1–190 (MEMASAFTLN…KLGLVDDVVP (190 aa)) are enoyl-CoA hydratase. A 3-hydroxyacyl-CoA dehydrogenase region spans residues 306 to 714 (APLNSVGILG…FWKTTATDLQ (409 aa)).

In the N-terminal section; belongs to the enoyl-CoA hydratase/isomerase family. It in the central section; belongs to the 3-hydroxyacyl-CoA dehydrogenase family. As to quaternary structure, heterotetramer of two alpha chains (FadJ) and two beta chains (FadI).

The protein localises to the cytoplasm. It catalyses the reaction a (3S)-3-hydroxyacyl-CoA = a (2E)-enoyl-CoA + H2O. The enzyme catalyses a 4-saturated-(3S)-3-hydroxyacyl-CoA = a (3E)-enoyl-CoA + H2O. The catalysed reaction is a (3S)-3-hydroxyacyl-CoA + NAD(+) = a 3-oxoacyl-CoA + NADH + H(+). It carries out the reaction (3S)-3-hydroxybutanoyl-CoA = (3R)-3-hydroxybutanoyl-CoA. The protein operates within lipid metabolism; fatty acid beta-oxidation. Its function is as follows. Catalyzes the formation of a hydroxyacyl-CoA by addition of water on enoyl-CoA. Also exhibits 3-hydroxyacyl-CoA epimerase and 3-hydroxyacyl-CoA dehydrogenase activities. This Escherichia coli O127:H6 (strain E2348/69 / EPEC) protein is Fatty acid oxidation complex subunit alpha.